Consider the following 12345-residue polypeptide: Muscle-specific protein 300 kDa (12345 aa).

2 disordered regions span residues 1–68 (MADS…STVT) and 121–152 (WSDG…DAEN). The Cytoplasmic portion of the chain corresponds to 1–12295 (MADSGGPGSK…GARFLGRVAR (12295 aa)). The segment covering 19–28 (AGGGGAGAAG) has biased composition (gly residues). The span at 45-60 (EQKSSREQVLEEEKSQ) shows a compositional bias: basic and acidic residues. The stretch at 249–273 (FKELENFLEGERTVREVPSADGVRT) is one LRR 1 repeat. 3 disordered regions span residues 295–325 (EGYV…RSVD), 387–488 (TVQV…RKLI), and 504–526 (GKSN…GRPA). The span at 299–321 (SPRDSPSWSRSSYSSERSSVTPP) shows a compositional bias: low complexity. 2 stretches are compositionally biased toward polar residues: residues 387–404 (TVQV…STPQ) and 414–434 (TTKT…QTGP). Over residues 462 to 484 (TITSTTTKSTSSSTSATSSSSTS) the composition is skewed to low complexity. The segment covering 511-520 (NDIDIDNDSD) has biased composition (acidic residues). Calponin-homology (CH) domains follow at residues 630-737 (RVQK…LYFQ) and 777-882 (QGAR…HKYP). An LRR 2 repeat occupies 823 to 847 (LVNLAELKKTSNRQRLETAFDVAES). One copy of the TPR 1 repeat lies at 919–952 (SSFPRDFGEYLLARSEVDAHLAAYNRLKQLIESQ). LRR repeat units lie at residues 1089–1112 (CCLI…YGHE), 1389–1411 (HLFH…IHQW), and 1616–1642 (LKDV…ILQR). One copy of the TPR 2 repeat lies at 1603-1636 (LEFRLDENAFYQSLKDVEKELQLEQQALNRNEDV). One copy of the HAT 1 repeat lies at 1903–1935 (TGWNQAYTETSDKLQALKGTQAVWSEFVDQKND). LRR repeat units follow at residues 2087–2109 (KQLD…IAEA) and 2558–2581 (QQQI…FGQA). The 125-residue stretch at 2109-2233 (AKRLKGEITK…SRWTAVHENA (125 aa)) folds into the Calponin-homology (CH) 3 domain. The TPR 3 repeat unit spans residues 2663 to 2696 (ADRIQKYNLISQALREYADSKDKFSKELKKAEDL). The disordered stretch occupies residues 2699-2724 (AIPQQPRDETELHQASEKTRKTMEQL). Basic and acidic residues predominate over residues 2704–2724 (PRDETELHQASEKTRKTMEQL). 3 LRR repeats span residues 2728 to 2751 (KLSL…IGEP), 2935 to 2959 (CRAL…VDEL), and 3030 to 3053 (SSDK…IDDC). Positions 2894–2962 (EQELRRRSKE…KQKVDELRNL (69 aa)) form a coiled coil. One copy of the Spectrin 1 repeat lies at 3110–3207 (LWSQYEQSNE…AVSKALTSYI (98 aa)). One copy of the TPR 4 repeat lies at 3346 to 3379 (KAKVPTTDELYPTLATKKAALQNYKTQLQEITLH). 4 LRR repeats span residues 3370–3393 (KTQL…AVTL), 3437–3462 (LEKA…TFEK), 3530–3556 (LVKL…WMKN), and 3611–3634 (NLKL…SIAK). The stretch at 3539-3633 (KWDEFDTIIE…LKNLCKESIA (95 aa)) is one Spectrin 2 repeat. The stretch at 3629–3662 (KESIAKYVNYVKDHESFDKDFDSFKQNLQSSVDE) is one TPR 5 repeat. An HAT 2 repeat occupies 3706-3739 (KLYGHTSPEGREIIRQQLRALRTLWDNYTDDLNS). Residues 3748–3771 (LLQFNEFSIAQDQLTKWLKDVDKA) form an LRR 15 repeat. Residues 4177-4273 (SYQDILNQTV…YDQVGQDCAK (97 aa)) form a Spectrin 3 repeat. The TPR 6 repeat unit spans residues 4360 to 4393 (EVMARDLANLHADFEKFGASLSDVKSGLENRLQQ). An HAT 3 repeat occupies 4371-4403 (ADFEKFGASLSDVKSGLENRLQQWNDYEINLDR). Residues 4611-4701 (FDEIADSLKS…GKLQKRAQNY (91 aa)) form a Spectrin 4 repeat. LRR repeat units follow at residues 4654 to 4676 (NDIN…LPEK) and 4742 to 4763 (EQIS…LADE). The HAT 4 repeat unit spans residues 4799 to 4830 (EWESLLTTISSTIEAIEARLQHWSEYEQLRDQ). Residues 4820-4919 (HWSEYEQLRD…VKELNNRWQQ (100 aa)) form a Spectrin 5 repeat. One copy of the LRR 18 repeat lies at 4839–4863 (DNNLHAIDLKEDLPKKRAQLDALKA). An HAT 5 repeat occupies 4894–4926 (ASGPELVTKYQQIFHKVKELNNRWQQYVTSHED). LRR repeat units lie at residues 5266 to 5289 (QIDI…EKQV) and 5333 to 5357 (SSVY…RDQH). The TPR 7 repeat unit spans residues 5645 to 5678 (SAEPEDCEIIEQEVALLQEEFDAYREALNKAKDY). LRR repeat units lie at residues 5761–5784 (SNAI…VMRR), 5820–5843 (PGTL…FETG), and 5979–6002 (TKFD…VNSH). A Spectrin 6 repeat occupies 5791 to 5895 (EHQQHHSLYE…DLNDVRQKLA (105 aa)). Residues 6088-6120 (SEWETLQTISRDARSSLESCLAAWQTFLQKFNK) form an HAT 6 repeat. Spectrin repeat units follow at residues 6321 to 6405 (RWND…DKLK) and 6424 to 6530 (AYHQ…RLLE). 2 coiled-coil regions span residues 6356-6397 (MKTL…VNRL) and 6454-6484 (REQT…LNAK). An LRR 24 repeat occupies 6363-6387 (YKTLSNELKLKGNELEQLQSEARDL). One copy of the TPR 8 repeat lies at 6522-6555 (VQIKNRLLESLAKFQEYEDTLDSIMRNLETYEPI). LRR repeat units lie at residues 6531–6554 (SLAK…TYEP) and 6560–6587 (LDAP…LNNE). Positions 6567–6597 (LELAQNQLRCAQEMQNKLNNEKSRLAAAVQA) form a coiled coil. The disordered stretch occupies residues 6631 to 6657 (EDLLDQKPPPKTRSSTGGVSTDDDKDE). The stretch at 6660–6695 (VEIQVELSDVNEALLDPIAHERVKNYRRIVRLNSAH) is one TPR 9 repeat. One copy of the LRR 27 repeat lies at 7004–7026 (SALRNLNTENRNLSGVLKAELDR). A TPR 10 repeat occupies 7161-7195 (EMETATEGELRTTSLPVLEEQLAHYKKLLSDAENK). LRR repeat units lie at residues 7219-7242 (LKLN…IDDR), 7300-7318 (KELK…DDLP), 7319-7339 (ELQS…DQLA), and 7340-7361 (HLRQ…IIAF). Residues 7419 to 7457 (KNSITEQLQSLKNQLQNLRKAVESQRQKHQLQLESHKKM) are a coiled coil. An LRR 32 repeat occupies 7524-7547 (SSLLEMLSEGRSLVASLPHELEER). One copy of the HAT 7 repeat lies at 7644–7676 (TKLTNTLANAKTQQSELEKEAERWREYQQSIDR). A TPR 11 repeat occupies 7654-7687 (KTQQSELEKEAERWREYQQSIDRVKATIERTKFV). 3 LRR repeats span residues 7692-7714 (QNLA…VQSQ), 7752-7777 (QDLV…GFEN), and 7816-7840 (LREE…ILTF). A TPR 12 repeat occupies 7759-7792 (EQRRDNLQQLAEHWDGFENSLHAWEKALGRLEDK). The stretch at 7799–7935 (TVRSRRHLED…NSQVQQAAEE (137 aa)) forms a coiled coil. Residues 7878–7911 (SKDLEEIEQVFRRISQLQDKLNALHEQLQSVHVY) form a TPR 13 repeat. 4 LRR repeats span residues 8178–8201 (KISV…EWDQ), 8238–8264 (EKTL…HFRN), 8298–8321 (EQTL…IIQE), and 8354–8377 (DELL…SLDG). A TPR 14 repeat occupies 8431 to 8464 (QQGITMIANAMHGQKKRQQEIDEYQQHLLELEQW). One copy of the LRR 40 repeat lies at 8534–8557 (EQLQSIITILREQVTVATKRIFTI). Disordered regions lie at residues 8583–8616 (IKPP…EEEI), 8966–9023 (QKPT…LPAP), 9131–9158 (EFEP…QVVA), 9361–9459 (GKES…PDSD), 9502–9735 (LVED…TSIS), and 9769–9797 (TMQL…EQQL). Residues 8601–8611 (SNENTIDSSSM) are compositionally biased toward polar residues. Residues 8982–9011 (TQVTTTTRTTTATTQEQEQPEQQTQPTTTE) show a composition bias toward low complexity. Positions 9136–9151 (SPHEESTKSDLVKPQE) are enriched in basic and acidic residues. Positions 9394–9404 (KRRRKKKKRRD) are enriched in basic residues. A compositionally biased stretch (acidic residues) spans 9410-9419 (ELEQEQETEP). A compositionally biased stretch (low complexity) spans 9420–9439 (EPVAAVKEPEVSSDVPVSPE). Residues 9440–9451 (DSPRDTVRHESI) show a composition bias toward basic and acidic residues. Composition is skewed to polar residues over residues 9544 to 9563 (AVQT…SQTL), 9587 to 9597 (ISTTEIQTDVS), and 9605 to 9625 (EISS…TTPK). Over residues 9658–9680 (TSEQSTVTETTTTTETHVQTTTP) the composition is skewed to low complexity. Residues 9681 to 9698 (EPREQTEVIKPETAHEET) are compositionally biased toward basic and acidic residues. An LRR 41 repeat occupies 9699 to 9721 (STVELVQFADGEMQTTPPGDQQP). Residues 9711–9735 (MQTTPPGDQQPASLDDSSLTATSIS) show a composition bias toward polar residues. Positions 9777 to 9788 (KKSKKDKKKKQK) are enriched in basic residues. LRR repeat units lie at residues 9995–10019 (SNVL…ILEV), 10073–10096 (EEKL…VVQL), 10252–10276 (KEFT…SLEQ), and 10353–10376 (RDEL…TSAD). Coiled-coil stretches lie at residues 10072 to 10099 (SEEK…LERQ) and 10172 to 10257 (LSAK…FTKI). A TPR 15 repeat occupies 10231–10264 (QAERERVLQLQSLAEEYEQTLKEFTKITVLADKL). The HAT 8 repeat unit spans residues 10426 to 10458 (IVLLKLREEVALYLHRLLVFKEIWVQYEQQTDK). LRR repeat units follow at residues 10512–10535 (EKSL…QLED), 10570–10593 (EREL…EEEL), and 10644–10667 (AEEL…ISNQ). The TPR 16 repeat unit spans residues 10854-10888 (VVAWNDTSENLQQLRTRYQRAVELWDKYRNASAAV). The HAT 9 repeat unit spans residues 10855 to 10887 (VAWNDTSENLQQLRTRYQRAVELWDKYRNASAA). LRR repeat units lie at residues 10907-10929 (DALQ…ILEL) and 11021-11043 (AHLQ…HQNS). A coiled-coil region spans residues 11016–11046 (LAALRAHLQTLARTEEQLRQLKERHQNSEVA). One copy of the HAT 10 repeat lies at 11070–11104 (DTFQEYHRLSTRLARSQNSSEALRLWRQYLQHVQS). Residues 11072 to 11105 (FQEYHRLSTRLARSQNSSEALRLWRQYLQHVQSF) form a TPR 17 repeat. Residues 11197 to 11222 (EAERNALQLRYIHLKRVPHLKHRLDA) form an LRR 51 repeat. 2 coiled-coil regions span residues 11220–11247 (LDAM…LARH) and 11281–11308 (LQRV…AQKL). 5 LRR repeats span residues 11342-11365 (SALE…DMKT), 11398-11422 (LSNY…VEKD), 11670-11692 (EELE…LAMS), 11697-11720 (PENI…LTPR), and 11744-11766 (EATN…ENQQ). Residues 11655–11685 (KHKLEERQMELRAKLEELESQSVNLRQLEQI) are a coiled coil. Residues 11776–11806 (LQRLESLEKKLQDAQQHVQQADNLAQEAKTR) are a coiled coil. The HAT 11 repeat unit spans residues 11804–11836 (KTRTKQQPQLKQLLELVSAYTTLWQTVQTRIVT). 2 LRR repeats span residues 11959–11981 (DTVA…RQQH) and 12198–12220 (SRLT…YIVK). The disordered stretch occupies residues 12253–12272 (SMQAAAPNTENANNTDGGDA). Residues 12256–12267 (AAAPNTENANNT) are compositionally biased toward low complexity. The KASH domain maps to 12287–12345 (ARFLGRVARASLPIQALMLLLLGVATLVPHGEDYTCMFSNTFARSLEPMLSYPHGPPPT). The helical; Anchor for type IV membrane protein transmembrane segment at 12296 to 12316 (ASLPIQALMLLLLGVATLVPH) threads the bilayer. The stretch at 12301–12323 (QALMLLLLGVATLVPHGEDYTCM) is one LRR 59 repeat. Residues 12317 to 12345 (GEDYTCMFSNTFARSLEPMLSYPHGPPPT) lie on the Perinuclear space side of the membrane.

Belongs to the nesprin family. Core component of LINC complexes which are composed of inner nuclear membrane SUN domain-containing proteins coupled to outer nuclear membrane KASH domain-containing nesprins. Interacts with klar; this interaction allows the anchoring of the Msp300 nuclear ring structure to the nuclear envelope. Interacts with sls; this interaction mediates the recruitment of Msp300 to the Z-disks.

Its subcellular location is the nucleus membrane. It is found in the cytoplasm. The protein resides in the myofibril. It localises to the sarcomere. The protein localises to the z line. Its subcellular location is the cytoskeleton. It is found in the microtubule organizing center. The protein resides in the perinuclear region. Functionally, component of the LINC (LInker of Nucleoskeleton and Cytoskeleton) complex involved in the connection between the nuclear lamina and the cytoskeleton. Collaborates with Klar to promote even spacing of the myonuclei at the periphery of striated muscle fibers by mediating a tight association between a nuclear ring structure of Msp300 and the plus ends of a unique astral MT network. In addition, is essential for anchoring nuclei, mitochondria and endoplasmic reticulum (ER) structures to the Z-disks. In fat body cells, part of perinuclear non-centrosomal microtubule-organizing centers (ncMTOCs) which function to accommodate the organization of microtubule (MT) networks to control nuclear positioning and dynein motor-based retrograde endosomal trafficking. Functions as the primary organizer of the ncMTOC by recruiting Patronin, shot and msps to the organizing centre. Within the ncMTOC, Msp300 and shot anchors the ncMTOC at the nuclear surface and recruits the MT minus-end regulators Patronin and Nin for assembly, anchoring and/or stabilization of circumferential and radial MTs at the ncMTOCs. Patronin, and perhaps Nin, recruits msps to the ncMTOC for the gamma-tubulin-independent elongation of radial MTs. This Drosophila melanogaster (Fruit fly) protein is Muscle-specific protein 300 kDa.